The sequence spans 172 residues: Cytochrome c oxidase subunit 4 isoform 2, mitochondrial (172 aa).

Residues 1 to 18 (MFSRATRSLVMKTGGLRT) constitute a mitochondrion transit peptide. The segment at 1-33 (MFSRATRSLVMKTGGLRTQGTHSPGSAASSSQR) is disordered. Over residues 16 to 33 (LRTQGTHSPGSAASSSQR) the composition is skewed to polar residues. Over 19-101 (QGTHSPGSAA…TFAEMNHRSN (83 aa)) the chain is Mitochondrial matrix. The chain crosses the membrane as a helical span at residues 102 to 127 (EWKTVMGCVFFFIGFTALVIWWQRVY). Residues 128–172 (VFPKKVVTLTEERKAQQLQRLLDMKSNPIQGLSAHWDYEKKEWKK) are Mitochondrial intermembrane-facing.

It belongs to the cytochrome c oxidase IV family. Component of the cytochrome c oxidase (complex IV, CIV), a multisubunit enzyme composed of 14 subunits. The complex is composed of a catalytic core of 3 subunits MT-CO1, MT-CO2 and MT-CO3, encoded in the mitochondrial DNA, and 11 supernumerary subunits COX4I, COX5A, COX5B, COX6A, COX6B, COX6C, COX7A, COX7B, COX7C, COX8 and NDUFA4, which are encoded in the nuclear genome. The complex exists as a monomer or a dimer and forms supercomplexes (SCs) in the inner mitochondrial membrane with NADH-ubiquinone oxidoreductase (complex I, CI) and ubiquinol-cytochrome c oxidoreductase (cytochrome b-c1 complex, complex III, CIII), resulting in different assemblies (supercomplex SCI(1)III(2)IV(1) and megacomplex MCI(2)III(2)IV(2)). In terms of tissue distribution, highly expressed in lung.

It is found in the mitochondrion inner membrane. Its pathway is energy metabolism; oxidative phosphorylation. Component of the cytochrome c oxidase, the last enzyme in the mitochondrial electron transport chain which drives oxidative phosphorylation. The respiratory chain contains 3 multisubunit complexes succinate dehydrogenase (complex II, CII), ubiquinol-cytochrome c oxidoreductase (cytochrome b-c1 complex, complex III, CIII) and cytochrome c oxidase (complex IV, CIV), that cooperate to transfer electrons derived from NADH and succinate to molecular oxygen, creating an electrochemical gradient over the inner membrane that drives transmembrane transport and the ATP synthase. Cytochrome c oxidase is the component of the respiratory chain that catalyzes the reduction of oxygen to water. Electrons originating from reduced cytochrome c in the intermembrane space (IMS) are transferred via the dinuclear copper A center (CU(A)) of subunit 2 and heme A of subunit 1 to the active site in subunit 1, a binuclear center (BNC) formed by heme A3 and copper B (CU(B)). The BNC reduces molecular oxygen to 2 water molecules using 4 electrons from cytochrome c in the IMS and 4 protons from the mitochondrial matrix. This chain is Cytochrome c oxidase subunit 4 isoform 2, mitochondrial (Cox4i2), found in Rattus norvegicus (Rat).